A 1073-amino-acid chain; its full sequence is Error-prone DNA polymerase (1073 aa).

Positions 41–73 are disordered; it reads EAEPECLSTPRPGPGSTEVPGERRGSRQGERSG. Positions 60-73 are enriched in basic and acidic residues; sequence PGERRGSRQGERSG.

The protein belongs to the DNA polymerase type-C family. DnaE2 subfamily.

The protein localises to the cytoplasm. It carries out the reaction DNA(n) + a 2'-deoxyribonucleoside 5'-triphosphate = DNA(n+1) + diphosphate. In terms of biological role, DNA polymerase involved in damage-induced mutagenesis and translesion synthesis (TLS). It is not the major replicative DNA polymerase. The sequence is that of Error-prone DNA polymerase from Corynebacterium efficiens (strain DSM 44549 / YS-314 / AJ 12310 / JCM 11189 / NBRC 100395).